Here is a 142-residue protein sequence, read N- to C-terminus: Large ribosomal subunit protein uL13 (142 aa).

Belongs to the universal ribosomal protein uL13 family. Part of the 50S ribosomal subunit.

This protein is one of the early assembly proteins of the 50S ribosomal subunit, although it is not seen to bind rRNA by itself. It is important during the early stages of 50S assembly. The polypeptide is Large ribosomal subunit protein uL13 (Shewanella baltica (strain OS185)).